A 1777-amino-acid polypeptide reads, in one-letter code: FERM and PDZ domain-containing protein 3 (1777 aa).

Residues 21–98 form the PDZ domain; it reads QVTVHRDPIY…FIVLTVLHTH (78 aa). Positions 147-461 constitute an FERM domain; the sequence is NVLKVFLENG…GYCRLLLDSR (315 aa). Disordered regions lie at residues 491-520, 555-574, 622-697, 832-871, 1014-1216, 1309-1346, and 1732-1765; these read TGGHLGKKESSYVGSVGTSPRKSSRCTPPP, ETRPRTKSDPTSKSSGQGYE, QLGP…GRHL, SLGRPDPNPSLQPIATGQSPGPPGARRKLPQSEGQVQGER, SAPE…PFRL, RPQATQTPVPSLRGRERDRVLPSQRQPEAGPGVSLSSP, and QQQQQQQQQQQQVAAAAGAATEHPPGSPTSATVM. Positions 502 to 511 are enriched in polar residues; that stretch reads YVGSVGTSPR. The span at 555–564 shows a compositional bias: basic and acidic residues; the sequence is ETRPRTKSDP. A compositionally biased stretch (acidic residues) spans 649–659; the sequence is SEEEEEEEDET. Polar residues-rich tracts occupy residues 840 to 850, 1015 to 1035, 1046 to 1056, and 1094 to 1111; these read PSLQPIATGQS, APETSWNSQHQLGAEVSSSPR, HLSQQEDSLPV, and LQKQGTISSQGEKAQLES. The span at 1134–1168 shows a compositional bias: low complexity; it reads QSPSCQSRSHSPSCQPHGHSPSSQSRGQSPSCQPR. A compositionally biased stretch (polar residues) spans 1172–1202; sequence PLRSQAASRQVSTMPSRKLETTLNGAHSTSE. A compositionally biased stretch (low complexity) spans 1732 to 1751; sequence QQQQQQQQQQQQVAAAAGAA.

The chain is FERM and PDZ domain-containing protein 3 from Homo sapiens (Human).